A 354-amino-acid polypeptide reads, in one-letter code: tRNase Z TRZ2, chloroplastic (354 aa).

Positions 1–21 (MQLSSSFPISPPKIFPSTKHH) are disordered. Residues 1 to 68 (MQLSSSFPIS…EEEEEYRKAR (68 aa)) constitute a chloroplast transit peptide.

It belongs to the RNase Z family. In terms of assembly, homodimer. Zn(2+) serves as cofactor. Requires Ca(2+) as cofactor. The cofactor is Mn(2+). It depends on Mg(2+) as a cofactor. In terms of tissue distribution, highly expressed in green and actively dividing tissues.

It is found in the plastid. It localises to the chloroplast. It carries out the reaction Endonucleolytic cleavage of RNA, removing extra 3' nucleotides from tRNA precursor, generating 3' termini of tRNAs. A 3'-hydroxy group is left at the tRNA terminus and a 5'-phosphoryl group is left at the trailer molecule.. In terms of biological role, zinc phosphodiesterase, which displays tRNA 3'-processing endonuclease activity. Involved in tRNA maturation, by removing a 3'-trailer from precursor tRNA. The chain is tRNase Z TRZ2, chloroplastic from Arabidopsis thaliana (Mouse-ear cress).